The chain runs to 379 residues: UDP-4-amino-4-deoxy-L-arabinose--oxoglutarate aminotransferase (379 aa).

Lys-182 is modified (N6-(pyridoxal phosphate)lysine).

This sequence belongs to the DegT/DnrJ/EryC1 family. ArnB subfamily. In terms of assembly, homodimer. Pyridoxal 5'-phosphate is required as a cofactor.

It carries out the reaction UDP-4-amino-4-deoxy-beta-L-arabinose + 2-oxoglutarate = UDP-beta-L-threo-pentopyranos-4-ulose + L-glutamate. Its pathway is nucleotide-sugar biosynthesis; UDP-4-deoxy-4-formamido-beta-L-arabinose biosynthesis; UDP-4-deoxy-4-formamido-beta-L-arabinose from UDP-alpha-D-glucuronate: step 2/3. It participates in bacterial outer membrane biogenesis; lipopolysaccharide biosynthesis. Its function is as follows. Catalyzes the conversion of UDP-4-keto-arabinose (UDP-Ara4O) to UDP-4-amino-4-deoxy-L-arabinose (UDP-L-Ara4N). The modified arabinose is attached to lipid A and is required for resistance to polymyxin and cationic antimicrobial peptides. The chain is UDP-4-amino-4-deoxy-L-arabinose--oxoglutarate aminotransferase from Salmonella schwarzengrund (strain CVM19633).